Here is a 247-residue protein sequence, read N- to C-terminus: Probable dihydroorotate dehydrogenase B (NAD(+)), electron transfer subunit (247 aa).

The FAD-binding FR-type domain occupies 1 to 87; the sequence is MLRRVMIKET…RGPYGNGFKS (87 aa). [2Fe-2S] cluster is bound by residues Cys-200, Cys-205, Cys-208, and Cys-216.

The protein belongs to the PyrK family. Heterotetramer of 2 PyrK and 2 PyrD type B subunits. [2Fe-2S] cluster is required as a cofactor. FAD serves as cofactor.

It functions in the pathway pyrimidine metabolism; UMP biosynthesis via de novo pathway; orotate from (S)-dihydroorotate (NAD(+) route): step 1/1. In terms of biological role, responsible for channeling the electrons from the oxidation of dihydroorotate from the FMN redox center in the PyrD type B subunit to the ultimate electron acceptor NAD(+). The polypeptide is Probable dihydroorotate dehydrogenase B (NAD(+)), electron transfer subunit (Pyrococcus abyssi (strain GE5 / Orsay)).